The following is a 123-amino-acid chain: Cysteine proteinase inhibitor 8 (123 aa).

Residues 1 to 19 (MARIPLLLALLLAVSAAAA) form the signal peptide. The 59-residue stretch at 33-91 (GGWSPITDVGDPHIQELGGWAVERHASLSSDGLRFRRVTSGEQQVVSGMNYRLVVSASD) folds into the Cystatin domain. The short motif at 76 to 80 (QVVSG) is the Secondary area of contact element.

It belongs to the cystatin family. Phytocystatin subfamily.

The protein resides in the secreted. Its function is as follows. Specific inhibitor of cysteine proteinases. Probably involved in the regulation of endogenous processes and in defense against pests and pathogens. This is Cysteine proteinase inhibitor 8 from Oryza sativa subsp. japonica (Rice).